A 154-amino-acid polypeptide reads, in one-letter code: Snaclec salmorin subunit A (154 aa).

Positions 1 to 23 (MGRFIFVSFGLLVVFLSLSGTGA) are cleaved as a signal peptide. Intrachain disulfides connect Cys-27/Cys-38, Cys-55/Cys-152, and Cys-127/Cys-144. The region spanning 34–153 (NNGHCYQAFN…CGQRNPFVCE (120 aa)) is the C-type lectin domain. The Ca(2+) site is built by Ser-66, Glu-68, and Glu-72. Ca(2+) is bound at residue Glu-153.

The protein belongs to the snaclec family. In terms of assembly, heterodimer of subunits A and B; disulfide-linked. Expressed by the venom gland.

Its subcellular location is the secreted. Functionally, inhibits thrombin-induced fibrinogen clotting and factor Xa-induced prothrombin activation. Binds to thrombin and prothrombin exosites. In Gloydius brevicauda (Korean slamosa snake), this protein is Snaclec salmorin subunit A.